We begin with the raw amino-acid sequence, 252 residues long: Ubiquinone biosynthesis O-methyltransferase (252 aa).

Residues R45, G76, D97, and M141 each coordinate S-adenosyl-L-methionine.

It belongs to the methyltransferase superfamily. UbiG/COQ3 family.

It catalyses the reaction a 3-demethylubiquinol + S-adenosyl-L-methionine = a ubiquinol + S-adenosyl-L-homocysteine + H(+). It carries out the reaction a 3-(all-trans-polyprenyl)benzene-1,2-diol + S-adenosyl-L-methionine = a 2-methoxy-6-(all-trans-polyprenyl)phenol + S-adenosyl-L-homocysteine + H(+). Its pathway is cofactor biosynthesis; ubiquinone biosynthesis. O-methyltransferase that catalyzes the 2 O-methylation steps in the ubiquinone biosynthetic pathway. The polypeptide is Ubiquinone biosynthesis O-methyltransferase (Caulobacter sp. (strain K31)).